A 281-amino-acid polypeptide reads, in one-letter code: Bifunctional protein FolD (281 aa).

NADP(+) contacts are provided by residues 164–166, serine 189, and isoleucine 230; that span reads GRS.

The protein belongs to the tetrahydrofolate dehydrogenase/cyclohydrolase family. Homodimer.

The enzyme catalyses (6R)-5,10-methylene-5,6,7,8-tetrahydrofolate + NADP(+) = (6R)-5,10-methenyltetrahydrofolate + NADPH. It catalyses the reaction (6R)-5,10-methenyltetrahydrofolate + H2O = (6R)-10-formyltetrahydrofolate + H(+). It participates in one-carbon metabolism; tetrahydrofolate interconversion. Its function is as follows. Catalyzes the oxidation of 5,10-methylenetetrahydrofolate to 5,10-methenyltetrahydrofolate and then the hydrolysis of 5,10-methenyltetrahydrofolate to 10-formyltetrahydrofolate. This is Bifunctional protein FolD from Pelagibacter ubique (strain HTCC1062).